A 132-amino-acid chain; its full sequence is PGA2-homolog C27.01c (132 aa).

The helical transmembrane segment at 17–34 threads the bilayer; sequence WIRIIVYVGGYMLIRPYL. Disordered stretches follow at residues 50–90 and 106–132; these read LLEG…DAEF and EYFK…HLED. Residues 62-75 show a composition bias toward basic and acidic residues; sequence EMTHGTKPKEHGEF. The segment covering 76 to 87 has biased composition (acidic residues); the sequence is DTDDEEEEENPD. Threonine 77 is subject to Phosphothreonine. The span at 106-115 shows a compositional bias: basic and acidic residues; sequence EYFKNQDKSP. Residues 119-132 show a composition bias toward acidic residues; it reads YADDDEDIEEHLED.

It belongs to the PGA2 family.

The protein localises to the endoplasmic reticulum membrane. The protein resides in the nucleus membrane. In terms of biological role, involved processing and trafficking glycosylated proteins. This chain is PGA2-homolog C27.01c, found in Schizosaccharomyces pombe (strain 972 / ATCC 24843) (Fission yeast).